The following is a 176-amino-acid chain: ATP synthase subunit delta (176 aa).

This sequence belongs to the ATPase delta chain family. In terms of assembly, F-type ATPases have 2 components, F(1) - the catalytic core - and F(0) - the membrane proton channel. F(1) has five subunits: alpha(3), beta(3), gamma(1), delta(1), epsilon(1). F(0) has three main subunits: a(1), b(2) and c(10-14). The alpha and beta chains form an alternating ring which encloses part of the gamma chain. F(1) is attached to F(0) by a central stalk formed by the gamma and epsilon chains, while a peripheral stalk is formed by the delta and b chains.

Its subcellular location is the cell inner membrane. F(1)F(0) ATP synthase produces ATP from ADP in the presence of a proton or sodium gradient. F-type ATPases consist of two structural domains, F(1) containing the extramembraneous catalytic core and F(0) containing the membrane proton channel, linked together by a central stalk and a peripheral stalk. During catalysis, ATP synthesis in the catalytic domain of F(1) is coupled via a rotary mechanism of the central stalk subunits to proton translocation. Functionally, this protein is part of the stalk that links CF(0) to CF(1). It either transmits conformational changes from CF(0) to CF(1) or is implicated in proton conduction. The chain is ATP synthase subunit delta from Wolinella succinogenes (strain ATCC 29543 / DSM 1740 / CCUG 13145 / JCM 31913 / LMG 7466 / NCTC 11488 / FDC 602W) (Vibrio succinogenes).